The primary structure comprises 72 residues: Putative transmembrane protein DDB_G0272126 (72 aa).

2 helical membrane-spanning segments follow: residues K6–I26 and I38–G58.

It localises to the membrane. The sequence is that of Putative transmembrane protein DDB_G0272126 from Dictyostelium discoideum (Social amoeba).